Reading from the N-terminus, the 301-residue chain is Oxygen-dependent coproporphyrinogen-III oxidase (301 aa).

Serine 90 lines the substrate pocket. 2 residues coordinate a divalent metal cation: histidine 94 and histidine 104. Histidine 104 serves as the catalytic Proton donor. Residue 106 to 108 participates in substrate binding; that stretch reads NVR. A divalent metal cation contacts are provided by histidine 143 and histidine 173. The important for dimerization stretch occupies residues 238–273; sequence YVEFNLVWDRGTLFGLQSGGRTESILMSLPPVVKWR. Substrate is bound at residue 256 to 258; that stretch reads GGR.

Belongs to the aerobic coproporphyrinogen-III oxidase family. In terms of assembly, homodimer. A divalent metal cation serves as cofactor.

The protein localises to the cytoplasm. The catalysed reaction is coproporphyrinogen III + O2 + 2 H(+) = protoporphyrinogen IX + 2 CO2 + 2 H2O. It functions in the pathway porphyrin-containing compound metabolism; protoporphyrin-IX biosynthesis; protoporphyrinogen-IX from coproporphyrinogen-III (O2 route): step 1/1. Its function is as follows. Involved in the heme biosynthesis. Catalyzes the aerobic oxidative decarboxylation of propionate groups of rings A and B of coproporphyrinogen-III to yield the vinyl groups in protoporphyrinogen-IX. The protein is Oxygen-dependent coproporphyrinogen-III oxidase of Nitrosomonas europaea (strain ATCC 19718 / CIP 103999 / KCTC 2705 / NBRC 14298).